The sequence spans 183 residues: MRKIVVAAIAVSLTTVGITASASADPSKDSKAQAAVAEAGITGTWYNQLGSTFIVTANADGSLTGTYESAVGNAESRYVLTGRYDSAPATDGSGTALGWTVAWKNNYRNAHSATTWSGQYVAGSEARINTQWLLTSGTTAANAWKSTLVGHDTFTKVKPSAASIDAAKKAGVNNGNPLDAVQQ.

A signal peptide spans 1–24 (MRKIVVAAIAVSLTTVGITASASA). The Avidin-like domain maps to 37 to 159 (AEAGITGTWY…GHDTFTKVKP (123 aa)). Biotin is bound by residues tyrosine 67 and tyrosine 78. Residues 83–85 (RYD) carry the Cell attachment site; atypical motif. Biotin is bound by residues tryptophan 116, tryptophan 132, and tryptophan 144.

It belongs to the avidin/streptavidin family. Homotetramer.

Its subcellular location is the secreted. The biological function of streptavidin is not known. Forms a strong non-covalent specific complex with biotin (one molecule of biotin per subunit of streptavidin). This is Streptavidin-V2 from Streptomyces violaceus (Streptomyces venezuelae).